The following is a 100-amino-acid chain: UPF0251 protein VVA1436 (100 aa).

This sequence belongs to the UPF0251 family.

The chain is UPF0251 protein VVA1436 from Vibrio vulnificus (strain YJ016).